Reading from the N-terminus, the 188-residue chain is NADH-quinone oxidoreductase subunit I (188 aa).

2 4Fe-4S ferredoxin-type domains span residues 44–74 and 90–119; these read LNRY…VEGA and QVYQ…MTNE. 8 residues coordinate [4Fe-4S] cluster: Cys54, Cys57, Cys60, Cys64, Cys99, Cys102, Cys105, and Cys109. A disordered region spans residues 167–188; it reads TGGAAAAAQDESEVDDTAGDRP. The segment covering 176–188 has biased composition (acidic residues); that stretch reads DESEVDDTAGDRP.

This sequence belongs to the complex I 23 kDa subunit family. As to quaternary structure, NDH-1 is composed of 14 different subunits. Subunits NuoA, H, J, K, L, M, N constitute the membrane sector of the complex. [4Fe-4S] cluster serves as cofactor.

It localises to the cell membrane. It carries out the reaction a quinone + NADH + 5 H(+)(in) = a quinol + NAD(+) + 4 H(+)(out). NDH-1 shuttles electrons from NADH, via FMN and iron-sulfur (Fe-S) centers, to quinones in the respiratory chain. The immediate electron acceptor for the enzyme in this species is believed to be ubiquinone. Couples the redox reaction to proton translocation (for every two electrons transferred, four hydrogen ions are translocated across the cytoplasmic membrane), and thus conserves the redox energy in a proton gradient. In Rhodococcus jostii (strain RHA1), this protein is NADH-quinone oxidoreductase subunit I.